A 488-amino-acid chain; its full sequence is Cis-aconitate decarboxylase (488 aa).

The protein belongs to the PrpD family. Homodimer. As to expression, expressed in LPS-tolerized macrophages (at protein level). Expressed in the luminal epithelial cells of pregnant uterus. Expressed in microglia and macrophage cells.

Its subcellular location is the mitochondrion. It carries out the reaction cis-aconitate + H(+) = itaconate + CO2. In terms of biological role, cis-aconitate decarboxylase that catalyzes production of itaconate and is involved in the inhibition of the inflammatory response. Acts as a negative regulator of the Toll-like receptors (TLRs)-mediated inflammatory innate response by stimulating the tumor necrosis factor alpha-induced protein TNFAIP3 expression via reactive oxygen species (ROS) in LPS-tolerized macrophages. Involved in antimicrobial response of innate immune cells; ACOD1-mediated itaconic acid production contributes to the antimicrobial activity of macrophages by generating itaconate, leading to alkylation of proteins, such as TFEB. Involved in antiviral response following infection by flavivirus in neurons: ACOD1-mediated itaconate production inhibits the activity of succinate dehydrogenase, generating a metabolic state in neurons that suppresses replication of viral genomes. Plays a role in the embryo implantation. The chain is Cis-aconitate decarboxylase from Mus musculus (Mouse).